The chain runs to 289 residues: Small ribosomal subunit protein uS2C (289 aa).

This sequence belongs to the universal ribosomal protein uS2 family. In terms of assembly, component of the small ribosomal subunit. Mature ribosomes consist of a small (40S) and a large (60S) subunit. The 40S subunit contains about 33 different proteins and 1 molecule of RNA (18S). The 60S subunit contains about 49 different proteins and 3 molecules of RNA (25S, 5.8S and 5S). Interacts with rps21.

The protein resides in the cytoplasm. Required for the assembly and/or stability of the 40S ribosomal subunit. Required for the processing of the 20S rRNA-precursor to mature 18S rRNA in a late step of the maturation of 40S ribosomal subunits. This chain is Small ribosomal subunit protein uS2C (rps0c), found in Schizosaccharomyces japonicus (strain yFS275 / FY16936) (Fission yeast).